A 301-amino-acid polypeptide reads, in one-letter code: Small ribosomal subunit protein uS3 (301 aa).

Residues 39 to 107 enclose the KH type-2 domain; the sequence is VREYLKAKLK…PVAVNIEEVR (69 aa). Residues 211–301 form a disordered region; the sequence is GESPGAKLDA…AAAADGTKTE (91 aa). The segment covering 224-244 has biased composition (basic and acidic residues); the sequence is DEERKPRGPRRDARPGSDRPA. The segment covering 245 to 257 has biased composition (low complexity); it reads PRGARAPRAPAGG.

Belongs to the universal ribosomal protein uS3 family. In terms of assembly, part of the 30S ribosomal subunit. Forms a tight complex with proteins S10 and S14.

Functionally, binds the lower part of the 30S subunit head. Binds mRNA in the 70S ribosome, positioning it for translation. This is Small ribosomal subunit protein uS3 from Polaromonas sp. (strain JS666 / ATCC BAA-500).